The chain runs to 443 residues: Putative metabolite transport protein YaaU (443 aa).

At 1–18 (MQPSRNFDDLKFSSIHRR) the chain is on the cytoplasmic side. The chain crosses the membrane as a helical span at residues 19–39 (ILLWGSGGPFLDGYVLVMIGV). Topologically, residues 40–53 (ALEQLTPALKLDAD) are periplasmic. The helical transmembrane segment at 54-74 (WIGLLGAGTLAGLFVGTSLFG) threads the bilayer. Residues 75 to 84 (YISDKVGRRK) are Cytoplasmic-facing. A helical transmembrane segment spans residues 85 to 105 (MFLIDIIAIGVISVATMFVSS). The Periplasmic segment spans residues 106 to 113 (PVELLVMR). Residues 114-134 (VLIGIVIGADYPIATSMITEF) form a helical membrane-spanning segment. Topologically, residues 135–145 (SSTRQRAFSIS) are cytoplasmic. A helical membrane pass occupies residues 146–166 (FIAAMWYVGATCADLVGYWLY). Residues 167–173 (DVEGGWR) are Periplasmic-facing. Residues 174-194 (WMLGSAAIPCLLILIGRFELP) traverse the membrane as a helical segment. The Cytoplasmic segment spans residues 195–241 (ESPRWLLRKGRVKECEEMMIKLFGEPVAFDEEQPQQTRFRDLFNRRH). A helical membrane pass occupies residues 242–262 (FPFVLFVAAIWTCQVIPMFAI). At 263–282 (YTFGPQIVGLLGLGVGKNAA) the chain is on the periplasmic side. Residues 283–303 (LGNVVISLFFMLGCIPPMLWL) form a helical membrane-spanning segment. Over 304–309 (NTAGRR) the chain is Cytoplasmic. A helical membrane pass occupies residues 310-329 (PLLIGSFAMMTLALAVLGLI). Residues 330-334 (PDMGI) are Periplasmic-facing. The helical transmembrane segment at 335–357 (WLVVMAFAVYAFFSGGPGNLQWL) threads the bilayer. Over 358–373 (YPNELFPTDIRASAVG) the chain is Cytoplasmic. Residues 374 to 394 (VIMSLSRIGTIVSTWALPIFI) traverse the membrane as a helical segment. Topologically, residues 395–401 (NNYGISN) are periplasmic. A helical transmembrane segment spans residues 402–422 (TMLMGAGISLFGLLISVAFAP). Residues 423–443 (ETRGMSLAQTSNMTIRGQRMG) are Cytoplasmic-facing.

It belongs to the major facilitator superfamily. Sugar transporter (TC 2.A.1.1) family.

The protein localises to the cell inner membrane. This chain is Putative metabolite transport protein YaaU (yaaU), found in Escherichia coli (strain K12).